Here is a 188-residue protein sequence, read N- to C-terminus: UPF0398 protein SSP1297 (188 aa).

The protein belongs to the UPF0398 family.

This Staphylococcus saprophyticus subsp. saprophyticus (strain ATCC 15305 / DSM 20229 / NCIMB 8711 / NCTC 7292 / S-41) protein is UPF0398 protein SSP1297.